The primary structure comprises 196 residues: Adenine phosphoribosyltransferase (196 aa).

Belongs to the purine/pyrimidine phosphoribosyltransferase family. In terms of assembly, homodimer.

The protein resides in the cytoplasm. The catalysed reaction is AMP + diphosphate = 5-phospho-alpha-D-ribose 1-diphosphate + adenine. Its pathway is purine metabolism; AMP biosynthesis via salvage pathway; AMP from adenine: step 1/1. Its function is as follows. Catalyzes a salvage reaction resulting in the formation of AMP, that is energically less costly than de novo synthesis. The protein is Adenine phosphoribosyltransferase of Methylibium petroleiphilum (strain ATCC BAA-1232 / LMG 22953 / PM1).